The sequence spans 437 residues: Adenylosuccinate synthetase, organellar chromatophore (437 aa).

Residues 12 to 18 (GDEGKGK) and 40 to 42 (GHT) contribute to the GTP site. The active-site Proton acceptor is the D13. The Mg(2+) site is built by D13 and G40. IMP-binding positions include 13–16 (DEGK), 38–41 (NAGH), T128, R142, Q223, T238, and R302. The Proton donor role is filled by H41. 298–304 (TTTGRRR) lines the substrate pocket. GTP contacts are provided by residues R304 and 330–332 (KLD).

Belongs to the adenylosuccinate synthetase family. Homodimer. It depends on Mg(2+) as a cofactor.

Its subcellular location is the plastid. The protein resides in the organellar chromatophore. It catalyses the reaction IMP + L-aspartate + GTP = N(6)-(1,2-dicarboxyethyl)-AMP + GDP + phosphate + 2 H(+). Its pathway is purine metabolism; AMP biosynthesis via de novo pathway; AMP from IMP: step 1/2. Its function is as follows. Plays an important role in the de novo pathway and in the salvage pathway of purine nucleotide biosynthesis. Catalyzes the first committed step in the biosynthesis of AMP from IMP. This Paulinella chromatophora protein is Adenylosuccinate synthetase, organellar chromatophore.